The chain runs to 395 residues: MTPYSSFLFFILLGILLLPTIILGLNGKRFQAYNMFISIIILALIFSHDLHGVIALCLFTIWQVLLISGYLAYRQKANSGFVFCGAVIASILPLFLSKIWPFLSHPQPHHPPHNLISFLGISYLTFKGVQLIMEARDGLLKEQLPLHRLLYFILFFPTISSGPIDRYRRFVKDEQKAWTKEEYADLLYTGIHKIFIGFLYKFIIGYAINTYFIMNLPAITHNKILGNLLYMYGYSMYLFFDFAGYTMFAVGVSYIMGIKSPENFNKPFISKNIKDFWNRWHMSLSFWFRDYVFMRFVFWMTKKKWIKNRMAVSNIGYFLLFMLMGVWHGLAPQYIIYGLYHAVLMTCYNFFEKWNKKYKWLPSNRWTTILAIVITFHFVCFGFYIFSGKPFHHHH.

Topologically, residues 1–6 (MTPYSS) are extracellular. The chain crosses the membrane as a helical span at residues 7–26 (FLFFILLGILLLPTIILGLN). Topologically, residues 27–30 (GKRF) are cytoplasmic. A helical membrane pass occupies residues 31 to 46 (QAYNMFISIIILALIF). Residues 47–50 (SHDL) are Extracellular-facing. The helical transmembrane segment at 51-76 (HGVIALCLFTIWQVLLISGYLAYRQK) threads the bilayer. Topologically, residues 77–79 (ANS) are cytoplasmic. Residues 80-104 (GFVFCGAVIASILPLFLSKIWPFLS) form a helical membrane-spanning segment. Over 105–120 (HPQPHHPPHNLISFLG) the chain is Extracellular. A helical membrane pass occupies residues 121–137 (ISYLTFKGVQLIMEARD). At 138–145 (GLLKEQLP) the chain is on the cytoplasmic side. An intramembrane segment occupies 146-175 (LHRLLYFILFFPTISSGPIDRYRRFVKDEQ). Residues 176 to 179 (KAWT) lie on the Cytoplasmic side of the membrane. The chain crosses the membrane as a helical span at residues 180-223 (KEEYADLLYTGIHKIFIGFLYKFIIGYAINTYFIMNLPAITHNK). A topological domain (extracellular) is located at residue isoleucine 224. A helical transmembrane segment spans residues 225-256 (LGNLLYMYGYSMYLFFDFAGYTMFAVGVSYIM). Topologically, residues 257-266 (GIKSPENFNK) are cytoplasmic. The stretch at 267–303 (PFISKNIKDFWNRWHMSLSFWFRDYVFMRFVFWMTKK) is an intramembrane region. Over 304 to 308 (KWIKN) the chain is Cytoplasmic. The helical transmembrane segment at 309-328 (RMAVSNIGYFLLFMLMGVWH) threads the bilayer. The active site involves histidine 328. Topologically, residues 329–333 (GLAPQ) are extracellular. A helical membrane pass occupies residues 334–351 (YIIYGLYHAVLMTCYNFF). Residues 352 to 364 (EKWNKKYKWLPSN) are Cytoplasmic-facing. Residues 365–387 (RWTTILAIVITFHFVCFGFYIFS) form a helical membrane-spanning segment. Over 388–395 (GKPFHHHH) the chain is Extracellular.

This sequence belongs to the membrane-bound acyltransferase family.

It is found in the cell membrane. Its pathway is cell wall biogenesis; lipoteichoic acid biosynthesis. Its function is as follows. O-acyltransferase that catalyzes D-alanylation of both teichoic acid and lipoteichoic acid (LTA). D-alanylation of LTA plays an important role in modulating the properties of the cell wall in Gram-positive bacteria, influencing the net charge of the cell wall. Catalyzes D-alanylation from DltC carrier protein. The polypeptide is Teichoic acid D-alanyltransferase (Bacillus subtilis (strain 168)).